Consider the following 325-residue polypeptide: Eukaryotic translation initiation factor 3 subunit I (325 aa).

WD repeat units lie at residues 8-47 (GHER…RLGT), 50-89 (GHTG…QLAL), 144-183 (CSES…IVNS), 186-225 (EHSK…HQKT), and 283-324 (GHFG…FEFE).

It belongs to the eIF-3 subunit I family. Component of the eukaryotic translation initiation factor 3 (eIF-3) complex, which is composed of 13 subunits: eif3a, eif3b, eif3c, eif3d, eif3e, eif3f, eif3g, eif3h, eif3i, eif3j, eif3k, eif3l and eif3m.

It localises to the cytoplasm. Its function is as follows. Component of the eukaryotic translation initiation factor 3 (eIF-3) complex, which is involved in protein synthesis of a specialized repertoire of mRNAs and, together with other initiation factors, stimulates binding of mRNA and methionyl-tRNAi to the 40S ribosome. The eIF-3 complex specifically targets and initiates translation of a subset of mRNAs involved in cell proliferation. This chain is Eukaryotic translation initiation factor 3 subunit I (eif3i), found in Xenopus tropicalis (Western clawed frog).